We begin with the raw amino-acid sequence, 301 residues long: Oxygen-dependent coproporphyrinogen-III oxidase (301 aa).

Position 90 (serine 90) interacts with substrate. Residues histidine 94 and histidine 104 each contribute to the a divalent metal cation site. Histidine 104 acts as the Proton donor in catalysis. 106–108 lines the substrate pocket; sequence NVR. Histidine 143 and histidine 173 together coordinate a divalent metal cation. Residues 238 to 273 form an important for dimerization region; sequence YVEFNLVWDRGTLFGLQSGGRTESILMSLPPVVKWR. 256-258 lines the substrate pocket; sequence GGR.

This sequence belongs to the aerobic coproporphyrinogen-III oxidase family. As to quaternary structure, homodimer. A divalent metal cation is required as a cofactor.

The protein resides in the cytoplasm. The catalysed reaction is coproporphyrinogen III + O2 + 2 H(+) = protoporphyrinogen IX + 2 CO2 + 2 H2O. The protein operates within porphyrin-containing compound metabolism; protoporphyrin-IX biosynthesis; protoporphyrinogen-IX from coproporphyrinogen-III (O2 route): step 1/1. Functionally, involved in the heme biosynthesis. Catalyzes the aerobic oxidative decarboxylation of propionate groups of rings A and B of coproporphyrinogen-III to yield the vinyl groups in protoporphyrinogen-IX. This is Oxygen-dependent coproporphyrinogen-III oxidase from Nitrosomonas europaea (strain ATCC 19718 / CIP 103999 / KCTC 2705 / NBRC 14298).